The following is a 159-amino-acid chain: 6,7-dimethyl-8-ribityllumazine synthase (159 aa).

5-amino-6-(D-ribitylamino)uracil-binding positions include Y23, 58 to 60, and 82 to 84; these read AYE and TII. Catalysis depends on H90, which acts as the Proton donor. I115 provides a ligand contact to 5-amino-6-(D-ribitylamino)uracil. R129 provides a ligand contact to (2S)-2-hydroxy-3-oxobutyl phosphate.

It belongs to the DMRL synthase family. In terms of assembly, forms an icosahedral capsid composed of 60 subunits, arranged as a dodecamer of pentamers.

The enzyme catalyses (2S)-2-hydroxy-3-oxobutyl phosphate + 5-amino-6-(D-ribitylamino)uracil = 6,7-dimethyl-8-(1-D-ribityl)lumazine + phosphate + 2 H2O + H(+). It functions in the pathway cofactor biosynthesis; riboflavin biosynthesis; riboflavin from 2-hydroxy-3-oxobutyl phosphate and 5-amino-6-(D-ribitylamino)uracil: step 1/2. Catalyzes the formation of 6,7-dimethyl-8-ribityllumazine by condensation of 5-amino-6-(D-ribitylamino)uracil with 3,4-dihydroxy-2-butanone 4-phosphate. This is the penultimate step in the biosynthesis of riboflavin. This Buchnera aphidicola subsp. Baizongia pistaciae (strain Bp) protein is 6,7-dimethyl-8-ribityllumazine synthase.